Consider the following 300-residue polypeptide: Actin-related protein 2/3 complex subunit 2-B (300 aa).

Belongs to the ARPC2 family. As to quaternary structure, component of the Arp2/3 complex composed of actr2/arp2, actr3/arp3, arpc1 (arpc1a or arpc1b), arpc2, arpc3, arpc4 and arpc5.

The protein localises to the cytoplasm. It is found in the cytoskeleton. Its subcellular location is the cell projection. The protein resides in the nucleus. In terms of biological role, actin-binding component of the Arp2/3 complex, a multiprotein complex that mediates actin polymerization upon stimulation by nucleation-promoting factor (NPF). The Arp2/3 complex mediates the formation of branched actin networks in the cytoplasm, providing the force for cell motility. In addition to its role in the cytoplasmic cytoskeleton, the Arp2/3 complex also promotes actin polymerization in the nucleus, thereby regulating gene transcription and repair of damaged DNA. The Arp2/3 complex promotes homologous recombination (HR) repair in response to DNA damage by promoting nuclear actin polymerization, leading to drive motility of double-strand breaks (DSBs). The sequence is that of Actin-related protein 2/3 complex subunit 2-B (arpc2-b) from Xenopus laevis (African clawed frog).